A 299-amino-acid polypeptide reads, in one-letter code: Pentalenolactone F synthase (299 aa).

Fe cation contacts are provided by histidine 105 and aspartate 107. 2-oxoglutarate is bound by residues threonine 133 and tryptophan 251. Residue histidine 266 participates in Fe cation binding. Arginine 277 contributes to the 2-oxoglutarate binding site.

Belongs to the TfdA dioxygenase family. The cofactor is Fe(2+).

The enzyme catalyses pentalenolactone D + 2 2-oxoglutarate + 2 O2 = pentalenolactone F + 2 succinate + 2 CO2 + H2O. It participates in antibiotic biosynthesis; pentalenolactone biosynthesis. With respect to regulation, activated by ascorbate. Functionally, catalyzes the Fe(2+) and alpha-ketoglutarate-dependent oxidation of pentalenolactone D to pentalenolactone F in the biosynthesis of pentalenolactone antibiotic. Also able to catalyze the oxidation of pentalenolactone D to pentalenolactone E. In Streptomyces arenae, this protein is Pentalenolactone F synthase (pntD).